A 332-amino-acid polypeptide reads, in one-letter code: Cytochrome c oxidase subunit 2 (332 aa).

Positions 1–20 are cleaved as a signal peptide; it reads MKIPGSVITLLIGVVITVVS. The next 2 membrane-spanning stretches (helical) occupy residues 48–68 and 87–107; these read MMTI…YCLI and VPLE…LAVY. Cu cation contacts are provided by H214, C249, C253, and H257.

Belongs to the cytochrome c oxidase subunit 2 family. Cu cation serves as cofactor.

The protein resides in the cell membrane. It carries out the reaction 4 Fe(II)-[cytochrome c] + O2 + 8 H(+)(in) = 4 Fe(III)-[cytochrome c] + 2 H2O + 4 H(+)(out). Subunits I and II form the functional core of the enzyme complex. Electrons originating in cytochrome c are transferred via heme a and Cu(A) to the binuclear center formed by heme a3 and Cu(B). In Synechocystis sp. (strain ATCC 27184 / PCC 6803 / Kazusa), this protein is Cytochrome c oxidase subunit 2 (ctaC).